A 91-amino-acid polypeptide reads, in one-letter code: Small ribosomal subunit protein uS19 (91 aa).

The protein belongs to the universal ribosomal protein uS19 family.

Its function is as follows. Protein S19 forms a complex with S13 that binds strongly to the 16S ribosomal RNA. The polypeptide is Small ribosomal subunit protein uS19 (Lactobacillus delbrueckii subsp. bulgaricus (strain ATCC 11842 / DSM 20081 / BCRC 10696 / JCM 1002 / NBRC 13953 / NCIMB 11778 / NCTC 12712 / WDCM 00102 / Lb 14)).